The sequence spans 410 residues: Multifunctional CCA protein (410 aa).

Residues glycine 8 and arginine 11 each coordinate ATP. The CTP site is built by glycine 8 and arginine 11. Mg(2+)-binding residues include glutamate 21 and aspartate 23. Arginine 91, arginine 137, and arginine 140 together coordinate ATP. The CTP site is built by arginine 91, arginine 137, and arginine 140. Positions 228–329 constitute an HD domain; it reads TGVHVLSVLR…LELLQRFDVF (102 aa).

This sequence belongs to the tRNA nucleotidyltransferase/poly(A) polymerase family. Bacterial CCA-adding enzyme type 1 subfamily. Monomer. Can also form homodimers and oligomers. It depends on Mg(2+) as a cofactor. Ni(2+) is required as a cofactor.

The enzyme catalyses a tRNA precursor + 2 CTP + ATP = a tRNA with a 3' CCA end + 3 diphosphate. It catalyses the reaction a tRNA with a 3' CCA end + 2 CTP + ATP = a tRNA with a 3' CCACCA end + 3 diphosphate. Functionally, catalyzes the addition and repair of the essential 3'-terminal CCA sequence in tRNAs without using a nucleic acid template. Adds these three nucleotides in the order of C, C, and A to the tRNA nucleotide-73, using CTP and ATP as substrates and producing inorganic pyrophosphate. tRNA 3'-terminal CCA addition is required both for tRNA processing and repair. Also involved in tRNA surveillance by mediating tandem CCA addition to generate a CCACCA at the 3' terminus of unstable tRNAs. While stable tRNAs receive only 3'-terminal CCA, unstable tRNAs are marked with CCACCA and rapidly degraded. The protein is Multifunctional CCA protein of Ectopseudomonas mendocina (strain ymp) (Pseudomonas mendocina).